The following is a 488-amino-acid chain: Sterol 14-demethylase (488 aa).

The chain crosses the membrane as a helical span at residues 12-32 (TGLVIVATLVIAKLIFSFFTS). Cys-433 contributes to the heme binding site.

Belongs to the cytochrome P450 family. It depends on heme as a cofactor. In terms of tissue distribution, expressed in leaves, roots, stems, siliques, flowers, flower buds and seedlings.

It is found in the membrane. It carries out the reaction a 14alpha-methyl steroid + 3 reduced [NADPH--hemoprotein reductase] + 3 O2 = a Delta(14) steroid + formate + 3 oxidized [NADPH--hemoprotein reductase] + 4 H2O + 4 H(+). Involved in sterol biosynthesis. Catalyzes the 14-alpha demethylation of obtusifoliol to 4 alpha-methyl-5 alpha-ergosta-8,14,24(28)-trien-3 beta-ol. This is Sterol 14-demethylase (CYP51G1) from Arabidopsis thaliana (Mouse-ear cress).